The primary structure comprises 351 residues: Protein IQ-DOMAIN 27 (351 aa).

The segment at 15 to 37 (KKSKDRSHVSGGDSVKGGDHSGD) is disordered. The segment at 98 to 114 (EERWAAVKIQKVFRGSL) is calmodulin-binding. IQ domains follow at residues 99 to 127 (ERWA…GIVK) and 128 to 150 (LQAL…SIQT). The Nuclear localization signal motif lies at 191–198 (DRRTKIVE). Over residues 299 to 310 (SFKAKVRSHSAP) the composition is skewed to basic residues. The segment at 299 to 351 (SFKAKVRSHSAPRQRSERQRLSLDEVMASKSSVSGVSMSHQHPPRHSCSCDPL) is disordered. Residues 312–321 (QRSERQRLSL) are compositionally biased toward basic and acidic residues. The segment covering 324–337 (VMASKSSVSGVSMS) has biased composition (low complexity).

Belongs to the IQD family. Binds to multiple calmodulin (CaM) in the presence of Ca(2+) and CaM-like proteins.

It localises to the nucleus. The protein localises to the nucleus envelope. It is found in the cytoplasm. Its subcellular location is the cytoskeleton. Functionally, may be involved in cooperative interactions with calmodulins or calmodulin-like proteins. Recruits calmodulin proteins to microtubules, thus being a potential scaffold in cellular signaling and trafficking. May associate with nucleic acids and regulate gene expression at the transcriptional or post-transcriptional level. The chain is Protein IQ-DOMAIN 27 from Arabidopsis thaliana (Mouse-ear cress).